Reading from the N-terminus, the 300-residue chain is Probable phytol kinase, chloroplastic (300 aa).

Residues 1–36 constitute a chloroplast transit peptide; that stretch reads MAAARPALPSSPTSLLLARSTSAPDLAARRPRRWLV. Transmembrane regions (helical) follow at residues 60–78, 98–118, 122–142, 168–188, 227–247, 254–274, and 276–296; these read LLRD…YSLV, VVHV…SNST, FFAA…GLGF, YVIV…IGIV, FISG…LGYI, ALGK…IPVT, and VVDD…LLFG.

The protein belongs to the polyprenol kinase family.

The protein resides in the plastid. It localises to the chloroplast membrane. It carries out the reaction phytol + CTP = phytyl phosphate + CDP + H(+). It functions in the pathway cofactor biosynthesis; tocopherol biosynthesis. In terms of biological role, involved in the activation and reutilization of phytol from chlorophyll degradation in plant metabolism, including tocopherol biosynthesis. Catalyzes the conversion of phytol to phytol monophosphate (PMP). This chain is Probable phytol kinase, chloroplastic, found in Triticum aestivum (Wheat).